An 89-amino-acid polypeptide reads, in one-letter code: Large ribosomal subunit protein eL34 (89 aa).

Residues 1-32 are disordered; sequence MPAPRFKSGSFKKISKRGPGNKTLTHHRRSKV.

This sequence belongs to the eukaryotic ribosomal protein eL34 family.

The protein is Large ribosomal subunit protein eL34 of Methanococcus aeolicus (strain ATCC BAA-1280 / DSM 17508 / OCM 812 / Nankai-3).